The sequence spans 467 residues: DNA repair protein RadA (467 aa).

The segment at 10 to 27 adopts a C4-type zinc-finger fold; that stretch reads CQNCGAVHSRWAGKCDSC. 98 to 105 is a binding site for ATP; that stretch reads GDPGIGKS. The RadA KNRFG motif signature appears at 260–264; that stretch reads KNRFG. Residues 359–467 form a lon-protease-like region; the sequence is DVYLNVAGGY…RIAASGAGKK (109 aa).

Belongs to the RecA family. RadA subfamily.

DNA-dependent ATPase involved in processing of recombination intermediates, plays a role in repairing DNA breaks. Stimulates the branch migration of RecA-mediated strand transfer reactions, allowing the 3' invading strand to extend heteroduplex DNA faster. Binds ssDNA in the presence of ADP but not other nucleotides, has ATPase activity that is stimulated by ssDNA and various branched DNA structures, but inhibited by SSB. Does not have RecA's homology-searching function. This chain is DNA repair protein RadA, found in Brucella abortus (strain 2308).